Reading from the N-terminus, the 454-residue chain is tRNA-2-methylthio-N(6)-dimethylallyladenosine synthase (454 aa).

One can recognise an MTTase N-terminal domain in the interval 6 to 122; it reads RRYHITTYGC…LQDLLEQVAS (117 aa). Positions 15, 51, 85, 157, 161, and 164 each coordinate [4Fe-4S] cluster. One can recognise a Radical SAM core domain in the interval 143–384; sequence RDSAVTAWVN…GVCAELRSQR (242 aa). In terms of domain architecture, TRAM spans 383–447; sequence QRYANRIEEV…SFSLTGEPLS (65 aa).

Belongs to the methylthiotransferase family. MiaB subfamily. Monomer. Requires [4Fe-4S] cluster as cofactor.

The protein localises to the cytoplasm. It carries out the reaction N(6)-dimethylallyladenosine(37) in tRNA + (sulfur carrier)-SH + AH2 + 2 S-adenosyl-L-methionine = 2-methylsulfanyl-N(6)-dimethylallyladenosine(37) in tRNA + (sulfur carrier)-H + 5'-deoxyadenosine + L-methionine + A + S-adenosyl-L-homocysteine + 2 H(+). Functionally, catalyzes the methylthiolation of N6-(dimethylallyl)adenosine (i(6)A), leading to the formation of 2-methylthio-N6-(dimethylallyl)adenosine (ms(2)i(6)A) at position 37 in tRNAs that read codons beginning with uridine. This Acaryochloris marina (strain MBIC 11017) protein is tRNA-2-methylthio-N(6)-dimethylallyladenosine synthase.